Here is a 302-residue protein sequence, read N- to C-terminus: HPr kinase/phosphorylase (302 aa).

Residues His-136 and Lys-157 contribute to the active site. Residue 151 to 158 (GESGIGKS) coordinates ATP. Ser-158 is a Mg(2+) binding site. Asp-175 functions as the Proton acceptor; for phosphorylation activity. Proton donor; for dephosphorylation activity in the catalytic mechanism. The interval 198–207 (LEVRGLGIID) is important for the catalytic mechanism of both phosphorylation and dephosphorylation. Glu-199 provides a ligand contact to Mg(2+). Arg-240 is a catalytic residue. An important for the catalytic mechanism of dephosphorylation region spans residues 261 to 266 (PIRPGR).

The protein belongs to the HPrK/P family. In terms of assembly, homohexamer. Requires Mg(2+) as cofactor.

It catalyses the reaction [HPr protein]-L-serine + ATP = [HPr protein]-O-phospho-L-serine + ADP + H(+). The catalysed reaction is [HPr protein]-O-phospho-L-serine + phosphate + H(+) = [HPr protein]-L-serine + diphosphate. Functionally, catalyzes the ATP- as well as the pyrophosphate-dependent phosphorylation of a specific serine residue in HPr, a phosphocarrier protein of the phosphoenolpyruvate-dependent sugar phosphotransferase system (PTS). HprK/P also catalyzes the pyrophosphate-producing, inorganic phosphate-dependent dephosphorylation (phosphorolysis) of seryl-phosphorylated HPr (P-Ser-HPr). The two antagonistic activities of HprK/P are regulated by several intracellular metabolites, which change their concentration in response to the absence or presence of rapidly metabolisable carbon sources (glucose, fructose, etc.) in the growth medium. Therefore, by controlling the phosphorylation state of HPr, HPrK/P is a sensor enzyme that plays a major role in the regulation of carbon metabolism and sugar transport: it mediates carbon catabolite repression (CCR), and regulates PTS-catalyzed carbohydrate uptake and inducer exclusion. This is HPr kinase/phosphorylase from Clostridium beijerinckii (strain ATCC 51743 / NCIMB 8052) (Clostridium acetobutylicum).